The primary structure comprises 60 residues: Venom protein 4.1 (60 aa).

A signal peptide spans 1–26 (MKALCAILLVLFACSVMFEHFSISTA).

This sequence belongs to the non-disulfide-bridged peptide (NDBP) superfamily. In terms of tissue distribution, expressed by the venom gland.

The protein resides in the secreted. The chain is Venom protein 4.1 from Lychas mucronatus (Chinese swimming scorpion).